We begin with the raw amino-acid sequence, 323 residues long: Transcription factor JunD (323 aa).

2 disordered regions span residues 138–173 and 197–221; these read QNQL…APGL and PFAA…QIVP. Residues 141–167 are compositionally biased toward gly residues; the sequence is LGGGGGPNGGAAAAGGGGGGGGGGGGE. Over residues 198–212 the composition is skewed to pro residues; the sequence is FAAPPPRLPPPPPPP. The segment at 242 to 269 is basic motif; that stretch reads RIKAERKRLRNRIAASKCRKRKLERISR. The bZIP domain maps to 242–305; the sequence is RIKAERKRLR…AQLKQKVLSH (64 aa). The segment at 270 to 298 is leucine-zipper; it reads LEEKVKSLKSQNTELASTASLLREQVAQL.

It belongs to the bZIP family. Jun subfamily. Binds DNA as a dimer.

Its subcellular location is the nucleus. The polypeptide is Transcription factor JunD (JUND) (Gallus gallus (Chicken)).